Consider the following 474-residue polypeptide: Glycogen synthase (474 aa).

K15 contributes to the ADP-alpha-D-glucose binding site.

This sequence belongs to the glycosyltransferase 1 family. Bacterial/plant glycogen synthase subfamily.

It carries out the reaction [(1-&gt;4)-alpha-D-glucosyl](n) + ADP-alpha-D-glucose = [(1-&gt;4)-alpha-D-glucosyl](n+1) + ADP + H(+). The protein operates within glycan biosynthesis; glycogen biosynthesis. Functionally, synthesizes alpha-1,4-glucan chains using ADP-glucose. This Chlamydia trachomatis serovar L2b (strain UCH-1/proctitis) protein is Glycogen synthase.